The following is a 945-amino-acid chain: Isoleucine--tRNA ligase (945 aa).

The 'HIGH' region motif lies at 66–76 (PYANGDIHLGH). Residue glutamate 581 participates in L-isoleucyl-5'-AMP binding. Residues 622–626 (KMSKS) carry the 'KMSKS' region motif. Residue lysine 625 participates in ATP binding. Residues cysteine 908, cysteine 911, cysteine 928, and cysteine 931 each contribute to the Zn(2+) site.

The protein belongs to the class-I aminoacyl-tRNA synthetase family. IleS type 1 subfamily. In terms of assembly, monomer. Zn(2+) is required as a cofactor.

It localises to the cytoplasm. The catalysed reaction is tRNA(Ile) + L-isoleucine + ATP = L-isoleucyl-tRNA(Ile) + AMP + diphosphate. In terms of biological role, catalyzes the attachment of isoleucine to tRNA(Ile). As IleRS can inadvertently accommodate and process structurally similar amino acids such as valine, to avoid such errors it has two additional distinct tRNA(Ile)-dependent editing activities. One activity is designated as 'pretransfer' editing and involves the hydrolysis of activated Val-AMP. The other activity is designated 'posttransfer' editing and involves deacylation of mischarged Val-tRNA(Ile). This chain is Isoleucine--tRNA ligase, found in Burkholderia vietnamiensis (strain G4 / LMG 22486) (Burkholderia cepacia (strain R1808)).